The sequence spans 591 residues: Calnexin (591 aa).

A signal peptide spans 1–20 (MEGKWLLCLLLVLGTAAIQA). Residues 21-482 (HDGHDDDMID…QMLEAAEERP (462 aa)) are Lumenal-facing. Residues serine 75 and aspartate 118 each coordinate Ca(2+). Lysine 138 carries the post-translational modification N6-acetyllysine. Cysteine 161 and cysteine 195 form a disulfide bridge. Residues tyrosine 165, lysine 167, tyrosine 186, and aspartate 193 each coordinate an alpha-D-glucoside. The disordered stretch occupies residues 261–347 (GNLLNDMTPP…EKPEDWDEDM (87 aa)). Residues 275–320 (REIEDPEDRKPEDWDERPKIADPDAVKPDDWDEDAPSKIPDEEATK) are compositionally biased toward basic and acidic residues. Positions 277–410 (IEDPEDRKPE…RKIPNPDFFE (134 aa)) are p domain (Extended arm). Repeat copies occupy residues 279 to 291 (DPED…WDER), 296 to 308 (DPDA…WDED), 315 to 327 (DEEA…WLDD), 334 to 346 (DPDA…WDED), and 349 to 359 (GEWEAPQIANP). 4 X approximate repeats regions lie at residues 279-346 (DPED…WDED) and 349-406 (GEWE…IPNP). A compositionally biased stretch (acidic residues) spans 324–347 (WLDDEPEYIPDPDAEKPEDWDEDM). The interaction with PPIB stretch occupies residues 327-360 (DEPEYIPDPDAEKPEDWDEDMDGEWEAPQIANPK). An intrachain disulfide couples cysteine 361 to cysteine 367. Repeat copies occupy residues 368 to 378 (GVWQRPMIDNP), 382 to 392 (GKWKPPMIDNP), and 396 to 406 (GIWKPRKIPNP). Glutamate 426 serves as a coordination point for an alpha-D-glucoside. Aspartate 437 serves as a coordination point for Ca(2+). A helical membrane pass occupies residues 483–503 (WLWVVYILTVALPVFLVILFC). 2 S-palmitoyl cysteine lipidation sites follow: cysteine 503 and cysteine 504. The Cytoplasmic segment spans residues 504–591 (CSGKKQSNAM…SPRNRKPRRE (88 aa)). The interval 504–591 (CSGKKQSNAM…SPRNRKPRRE (88 aa)) is sufficient to mediate interaction with SGIP1. Basic and acidic residues predominate over residues 514–538 (EYKKTDAPQPDVKDEEGKEEEKNKG). A disordered region spans residues 514 to 591 (EYKKTDAPQP…SPRNRKPRRE (78 aa)). Serine 553 is subject to Phosphoserine. Over residues 555-568 (AEEDGGTGSQDEED) the composition is skewed to acidic residues. Phosphothreonine is present on threonine 561. At serine 563 the chain carries Phosphoserine; by MAPK3. A Phosphoserine modification is found at serine 582.

This sequence belongs to the calreticulin family. As to quaternary structure, interacts with MAPK3/ERK1. Interacts with KCNH2. Associates with ribosomes. Interacts with SGIP1; involved in negative regulation of endocytosis. The palmitoylated form interacts with the ribosome-translocon complex component SSR1, promoting efficient folding of glycoproteins. Interacts with SERPINA2P/SERPINA2 and with the S and Z variants of SERPINA1. Interacts with PPIB. Interacts with ZNRF4. Interacts with SMIM22. Interacts with TMX2. Interacts with TMEM35A/NACHO and CHRNA7. Interacts with reticulophagy regulators RETREG2 and RETREG3. Interacts with DNM1L; may form part of a larger protein complex at the ER-mitochondrial interface during mitochondrial fission. Interacts with ADAM7. Post-translationally, phosphorylated at Ser-563 by MAPK3/ERK1. Phosphorylation by MAPK3/ERK1 increases its association with ribosomes. Palmitoylation by DHHC6 leads to the preferential localization to the perinuclear rough ER. It mediates the association of calnexin with the ribosome-translocon complex (RTC) which is required for efficient folding of glycosylated proteins. In terms of processing, ubiquitinated, leading to proteasomal degradation. Probably ubiquitinated by ZNRF4.

Its subcellular location is the endoplasmic reticulum membrane. It localises to the mitochondrion membrane. The protein localises to the melanosome membrane. Its function is as follows. Calcium-binding protein that interacts with newly synthesized monoglucosylated glycoproteins in the endoplasmic reticulum. It may act in assisting protein assembly and/or in the retention within the ER of unassembled protein subunits. It seems to play a major role in the quality control apparatus of the ER by the retention of incorrectly folded proteins. Associated with partial T-cell antigen receptor complexes that escape the ER of immature thymocytes, it may function as a signaling complex regulating thymocyte maturation. Additionally it may play a role in receptor-mediated endocytosis at the synapse. In Rattus norvegicus (Rat), this protein is Calnexin (Canx).